We begin with the raw amino-acid sequence, 325 residues long: Anthranilate phosphoribosyltransferase (325 aa).

5-phospho-alpha-D-ribose 1-diphosphate contacts are provided by residues glycine 73, glycine 76–aspartate 77, threonine 81, asparagine 83–threonine 86, lysine 100–serine 108, and serine 112. Anthranilate is bound at residue glycine 73. Serine 85 provides a ligand contact to Mg(2+). Asparagine 103 lines the anthranilate pocket. Residue arginine 158 coordinates anthranilate. Mg(2+) is bound by residues aspartate 216 and glutamate 217.

Belongs to the anthranilate phosphoribosyltransferase family. Homodimer. Mg(2+) is required as a cofactor.

The enzyme catalyses N-(5-phospho-beta-D-ribosyl)anthranilate + diphosphate = 5-phospho-alpha-D-ribose 1-diphosphate + anthranilate. The protein operates within amino-acid biosynthesis; L-tryptophan biosynthesis; L-tryptophan from chorismate: step 2/5. In terms of biological role, catalyzes the transfer of the phosphoribosyl group of 5-phosphorylribose-1-pyrophosphate (PRPP) to anthranilate to yield N-(5'-phosphoribosyl)-anthranilate (PRA). The protein is Anthranilate phosphoribosyltransferase of Methanococcus aeolicus (strain ATCC BAA-1280 / DSM 17508 / OCM 812 / Nankai-3).